The primary structure comprises 211 residues: LexA repressor (211 aa).

A DNA-binding region (H-T-H motif) is located at residues 27–47 (QTEIARAFGFKGVRAVQHHLD). Catalysis depends on for autocatalytic cleavage activity residues S131 and K168.

The protein belongs to the peptidase S24 family. Homodimer.

The catalysed reaction is Hydrolysis of Ala-|-Gly bond in repressor LexA.. Its function is as follows. Represses a number of genes involved in the response to DNA damage (SOS response), including recA and lexA. In the presence of single-stranded DNA, RecA interacts with LexA causing an autocatalytic cleavage which disrupts the DNA-binding part of LexA, leading to derepression of the SOS regulon and eventually DNA repair. This is LexA repressor from Xylella fastidiosa (strain M12).